Here is a 172-residue protein sequence, read N- to C-terminus: Ribosome maturation factor RimM (172 aa).

One can recognise a PRC barrel domain in the interval 97–170 (DDEYYYDEII…LITIDVLEGL (74 aa)).

Belongs to the RimM family. Binds ribosomal protein uS19.

It localises to the cytoplasm. Functionally, an accessory protein needed during the final step in the assembly of 30S ribosomal subunit, possibly for assembly of the head region. Essential for efficient processing of 16S rRNA. May be needed both before and after RbfA during the maturation of 16S rRNA. It has affinity for free ribosomal 30S subunits but not for 70S ribosomes. This is Ribosome maturation factor RimM from Leuconostoc citreum (strain KM20).